The chain runs to 295 residues: Protease HtpX (295 aa).

Helical transmembrane passes span 4–24 (ILLF…TLSL) and 41–61 (GQLL…SLFI). His-147 provides a ligand contact to Zn(2+). Glu-148 is an active-site residue. His-151 serves as a coordination point for Zn(2+). The next 2 membrane-spanning stretches (helical) occupy residues 158-178 (VTMA…ARII) and 198-218 (FVAT…IVMW). Position 224 (Glu-224) interacts with Zn(2+).

Belongs to the peptidase M48B family. The cofactor is Zn(2+).

Its subcellular location is the cell inner membrane. The polypeptide is Protease HtpX (Pseudomonas entomophila (strain L48)).